The chain runs to 200 residues: A-type ATP synthase subunit E (200 aa).

Belongs to the V-ATPase E subunit family. As to quaternary structure, has multiple subunits with at least A(3), B(3), C, D, E, F, H, I and proteolipid K(x).

It is found in the cell membrane. Component of the A-type ATP synthase that produces ATP from ADP in the presence of a proton gradient across the membrane. This Aeropyrum pernix (strain ATCC 700893 / DSM 11879 / JCM 9820 / NBRC 100138 / K1) protein is A-type ATP synthase subunit E.